Reading from the N-terminus, the 274-residue chain is Kit ligand (274 aa).

A signal peptide spans 1 to 25; sequence MKKTQTWIVTCIYLQLLLFNPLVKT. Residues 26-215 lie on the Extracellular side of the membrane; sequence KGLCRNRVTD…TNPIEDSSIQ (190 aa). Cystine bridges form between Cys-29–Cys-114 and Cys-68–Cys-164. 4 N-linked (GlcNAc...) asparagine glycosylation sites follow: Asn-90, Asn-97, Asn-145, and Asn-196. A helical membrane pass occupies residues 216-238; that stretch reads WAVMALPACFSLVIGFAFGAFYW. Residues 239–274 lie on the Cytoplasmic side of the membrane; the sequence is KKKQPNLTRTVENIQINEEDNEISMLQEKEREFQEV.

It belongs to the SCF family. As to quaternary structure, homodimer, non-covalently linked. Post-translationally, a soluble form is produced by proteolytic processing of isoform 1 in the extracellular domain.

It localises to the cell membrane. The protein resides in the secreted. Its subcellular location is the cytoplasm. The protein localises to the cytoskeleton. It is found in the cell projection. It localises to the lamellipodium. The protein resides in the filopodium. Functionally, stimulates the proliferation of mast cells. Able to augment the proliferation of both myeloid and lymphoid hematopoietic progenitors in bone marrow culture. Also mediates cell-cell adhesion. Acts synergistically with other cytokines, probably interleukins. This Felis catus (Cat) protein is Kit ligand (KITLG).